A 160-amino-acid chain; its full sequence is Cyclic pyranopterin monophosphate synthase (160 aa).

Residues 77–79 and 114–115 contribute to the substrate site; these read MCH and ME. Residue Asp129 is part of the active site.

It belongs to the MoaC family. Homohexamer; trimer of dimers.

It catalyses the reaction (8S)-3',8-cyclo-7,8-dihydroguanosine 5'-triphosphate = cyclic pyranopterin phosphate + diphosphate. It functions in the pathway cofactor biosynthesis; molybdopterin biosynthesis. Functionally, catalyzes the conversion of (8S)-3',8-cyclo-7,8-dihydroguanosine 5'-triphosphate to cyclic pyranopterin monophosphate (cPMP). This chain is Cyclic pyranopterin monophosphate synthase, found in Listeria innocua serovar 6a (strain ATCC BAA-680 / CLIP 11262).